The chain runs to 171 residues: 3-hydroxydecanoyl-[acyl-carrier-protein] dehydratase (171 aa).

His-70 is a catalytic residue.

It belongs to the thioester dehydratase family. FabA subfamily. In terms of assembly, homodimer.

The protein resides in the cytoplasm. The enzyme catalyses a (3R)-hydroxyacyl-[ACP] = a (2E)-enoyl-[ACP] + H2O. The catalysed reaction is (3R)-hydroxydecanoyl-[ACP] = (2E)-decenoyl-[ACP] + H2O. It carries out the reaction (2E)-decenoyl-[ACP] = (3Z)-decenoyl-[ACP]. Its pathway is lipid metabolism; fatty acid biosynthesis. Its function is as follows. Necessary for the introduction of cis unsaturation into fatty acids. Catalyzes the dehydration of (3R)-3-hydroxydecanoyl-ACP to E-(2)-decenoyl-ACP and then its isomerization to Z-(3)-decenoyl-ACP. Can catalyze the dehydratase reaction for beta-hydroxyacyl-ACPs with saturated chain lengths up to 16:0, being most active on intermediate chain length. This is 3-hydroxydecanoyl-[acyl-carrier-protein] dehydratase from Shewanella sp. (strain MR-4).